A 101-amino-acid polypeptide reads, in one-letter code: U1-sicaritoxin-Li1a (101 aa).

The first 19 residues, 1 to 19 (MRFLVGAVLVVVLVACATA), serve as a signal peptide directing secretion. Residues 20-35 (FESDAETFKSLVVEER) constitute a propeptide that is removed on maturation. 4 disulfide bridges follow: Cys-37/Cys-54, Cys-45/Cys-59, Cys-53/Cys-72, and Cys-61/Cys-70. Lys-81 carries the lysine amide modification. Residues 85–101 (ALLLPVETHRLLFPEQW) constitute a propeptide that is removed on maturation.

This sequence belongs to the neurotoxin 28 (Litx) family. Expressed by the venom gland.

The protein resides in the secreted. Its function is as follows. Toxin active against insects (S.frugiperda larvae). May act on sodium (Nav) or calcium channels (Cav). The polypeptide is U1-sicaritoxin-Li1a (Loxosceles intermedia (Brown spider)).